A 147-amino-acid polypeptide reads, in one-letter code: Peptide deformylase (147 aa).

C88 and H130 together coordinate Fe cation. E131 is a catalytic residue. H134 contacts Fe cation.

Belongs to the polypeptide deformylase family. It depends on Fe(2+) as a cofactor.

It catalyses the reaction N-terminal N-formyl-L-methionyl-[peptide] + H2O = N-terminal L-methionyl-[peptide] + formate. Removes the formyl group from the N-terminal Met of newly synthesized proteins. Requires at least a dipeptide for an efficient rate of reaction. N-terminal L-methionine is a prerequisite for activity but the enzyme has broad specificity at other positions. The polypeptide is Peptide deformylase (Alkaliphilus metalliredigens (strain QYMF)).